A 204-amino-acid chain; its full sequence is ATP-dependent Clp protease proteolytic subunit 1 (204 aa).

Ser-97 acts as the Nucleophile in catalysis. The active site involves His-122.

This sequence belongs to the peptidase S14 family. Fourteen ClpP subunits assemble into 2 heptameric rings which stack back to back to give a disk-like structure with a central cavity, resembling the structure of eukaryotic proteasomes.

It is found in the cytoplasm. It catalyses the reaction Hydrolysis of proteins to small peptides in the presence of ATP and magnesium. alpha-casein is the usual test substrate. In the absence of ATP, only oligopeptides shorter than five residues are hydrolyzed (such as succinyl-Leu-Tyr-|-NHMec, and Leu-Tyr-Leu-|-Tyr-Trp, in which cleavage of the -Tyr-|-Leu- and -Tyr-|-Trp bonds also occurs).. In terms of biological role, cleaves peptides in various proteins in a process that requires ATP hydrolysis. Has a chymotrypsin-like activity. Plays a major role in the degradation of misfolded proteins. In Trichormus variabilis (strain ATCC 29413 / PCC 7937) (Anabaena variabilis), this protein is ATP-dependent Clp protease proteolytic subunit 1.